We begin with the raw amino-acid sequence, 291 residues long: uncharacterized protein (291 aa).

Helical transmembrane passes span 13–33 (IILI…SITI), 84–104 (IVLF…IGII), 111–131 (LLHL…FIII), and 219–239 (LIYC…IYYL).

It is found in the cell membrane. This is an uncharacterized protein from Ureaplasma parvum serovar 3 (strain ATCC 700970).